A 139-amino-acid polypeptide reads, in one-letter code: Peptide methionine sulfoxide reductase MsrB (139 aa).

Positions 17–139 (EEQWRRELSP…NSAALKLEPK (123 aa)) constitute a MsrB domain. Residues Cys56, Cys59, Cys105, and Cys108 each coordinate Zn(2+). The Nucleophile role is filled by Cys128.

The protein belongs to the MsrB Met sulfoxide reductase family. Zn(2+) serves as cofactor.

It carries out the reaction L-methionyl-[protein] + [thioredoxin]-disulfide + H2O = L-methionyl-(R)-S-oxide-[protein] + [thioredoxin]-dithiol. The sequence is that of Peptide methionine sulfoxide reductase MsrB from Bradyrhizobium diazoefficiens (strain JCM 10833 / BCRC 13528 / IAM 13628 / NBRC 14792 / USDA 110).